Reading from the N-terminus, the 601-residue chain is Glutamine--fructose-6-phosphate aminotransferase [isomerizing] (601 aa).

Cys-2 functions as the Nucleophile; for GATase activity in the catalytic mechanism. The Glutamine amidotransferase type-2 domain maps to 2–218 (CGIVGYIGYD…DHEIVIVKKD (217 aa)). SIS domains lie at 284 to 423 (IIND…EHGR) and 453 to 591 (IATD…VDKP). Catalysis depends on Lys-596, which acts as the For Fru-6P isomerization activity.

As to quaternary structure, homodimer.

The protein localises to the cytoplasm. The catalysed reaction is D-fructose 6-phosphate + L-glutamine = D-glucosamine 6-phosphate + L-glutamate. Catalyzes the first step in hexosamine metabolism, converting fructose-6P into glucosamine-6P using glutamine as a nitrogen source. The sequence is that of Glutamine--fructose-6-phosphate aminotransferase [isomerizing] from Staphylococcus aureus (strain MRSA252).